Reading from the N-terminus, the 228-residue chain is MRILVVDDDRAVRESLRRSLSFNGYSVELAHDGVEALDMIASDRPDALVLDVMMPRLDGLEVCRQLRSTGDDLPILVLTARDSVSERVAGLDAGADDYLPKPFALEELLARMRALLRRTKPEDDAESVAMTFSDLTLDPVTREVTRGQRRISLTRTEFALLEMLIANPRRVLTRSRILEEVWGFDFPTSGNALEVYVGYLRRKTEADGEPRLIHTVRGVGYVLRETPP.

Residues 2–116 (RILVVDDDRA…ELLARMRALL (115 aa)) enclose the Response regulatory domain. At D46 the chain carries 4-aspartylphosphate. Residues 127–225 (SVAMTFSDLT…VRGVGYVLRE (99 aa)) constitute a DNA-binding region (ompR/PhoB-type).

Phosphorylated and dephosphorylated by MprB.

It is found in the cytoplasm. Member of the two-component regulatory system MprB/MprA which contributes to maintaining a balance among several systems involved in stress resistance and is required for establishment and maintenance of persistent infection in the host. Functions as a transcriptional regulator that recognizes a 19-bp nucleotide motif comprizing two loosely conserved 8-bp direct DNA-binding motif repeats separated by a 3-bp spacer region. This is Response regulator MprA (mprA) from Mycobacterium avium (strain 104).